The sequence spans 3189 residues: Beauvericin nonribosomal cyclodepsipeptide synthetase (3189 aa).

The segment at His-73–Ala-466 is condensation 1. Residues Asp-202 to Lys-223 are disordered. Residues Pro-208–Ser-220 are compositionally biased toward low complexity. The interval Ala-507–Arg-901 is adenylation 1. The Carrier 1 domain maps to Thr-1036–Ser-1112. Ser-1073 bears the O-(pantetheine 4'-phosphoryl)serine mark. Residues Ser-1136 to Thr-1569 are condensation 2. Positions Phe-1599–Arg-2004 are adenylation 2. An S-adenosyl-L-methionine-dependent N-methyltransferase region spans residues Met-2072–Val-2211. 2 consecutive Carrier domains span residues Cys-2557–Leu-2631 and Ala-2654–Gln-2728. 2 positions are modified to O-(pantetheine 4'-phosphoryl)serine: Ser-2591 and Ser-2688. The tract at residues Gln-2773–Leu-3181 is condensation 3.

Belongs to the NRP synthetase family.

The enzyme catalyses 3 (R)-2-hydroxy-3-methylbutanoate + 3 L-phenylalanine + 3 S-adenosyl-L-methionine + 6 ATP = beauvericin + 6 AMP + 3 S-adenosyl-L-homocysteine + 6 diphosphate + 6 H(+). Its function is as follows. Beauvericin nonribosomal cyclodepsipeptide synthetase; part of the gene cluster that mediates the biosynthesis of beauvericin (BEA), a non-ribosomal cyclic hexadepsipeptide that shows antibiotic, antifungal, insecticidal, and cancer cell antiproliferative and antihaptotactic activity. Ketoisovalerate reductase BEA2 catalyzes the NADPH-specific reduction of ketoisovaleric acid to hydroxyisovalerate, a precursor for beauvericin biosynthesis. The nonribosomal cyclodepsipeptide synthetase BEA1 then catalyzes the formation of beauvericin via condensation and cyclization of 3 dipeptidol monomers, each composed of one unit of hydroxyisovalerate and one unit of N-methyl-phenylalanine. In Beauveria bassiana (White muscardine disease fungus), this protein is Beauvericin nonribosomal cyclodepsipeptide synthetase (Beas).